The following is a 381-amino-acid chain: tRNA N6-adenosine threonylcarbamoyltransferase (381 aa).

Positions 114 and 118 each coordinate Fe cation. Substrate is bound by residues 142 to 146, D178, G191, D195, and N321; that span reads VVSGG. D349 is a Fe cation binding site.

The protein belongs to the KAE1 / TsaD family. It depends on Fe(2+) as a cofactor.

The protein resides in the cytoplasm. The enzyme catalyses L-threonylcarbamoyladenylate + adenosine(37) in tRNA = N(6)-L-threonylcarbamoyladenosine(37) in tRNA + AMP + H(+). In terms of biological role, required for the formation of a threonylcarbamoyl group on adenosine at position 37 (t(6)A37) in tRNAs that read codons beginning with adenine. Is involved in the transfer of the threonylcarbamoyl moiety of threonylcarbamoyl-AMP (TC-AMP) to the N6 group of A37, together with TsaE and TsaB. TsaD likely plays a direct catalytic role in this reaction. This chain is tRNA N6-adenosine threonylcarbamoyltransferase, found in Koribacter versatilis (strain Ellin345).